The following is a 220-amino-acid chain: Deoxyribose-phosphate aldolase (220 aa).

Aspartate 89 functions as the Proton donor/acceptor in the catalytic mechanism. The active-site Schiff-base intermediate with acetaldehyde is the lysine 151. Lysine 180 functions as the Proton donor/acceptor in the catalytic mechanism.

This sequence belongs to the DeoC/FbaB aldolase family. DeoC type 1 subfamily.

It is found in the cytoplasm. The enzyme catalyses 2-deoxy-D-ribose 5-phosphate = D-glyceraldehyde 3-phosphate + acetaldehyde. It participates in carbohydrate degradation; 2-deoxy-D-ribose 1-phosphate degradation; D-glyceraldehyde 3-phosphate and acetaldehyde from 2-deoxy-alpha-D-ribose 1-phosphate: step 2/2. In terms of biological role, catalyzes a reversible aldol reaction between acetaldehyde and D-glyceraldehyde 3-phosphate to generate 2-deoxy-D-ribose 5-phosphate. The protein is Deoxyribose-phosphate aldolase of Streptococcus uberis (strain ATCC BAA-854 / 0140J).